Here is a 490-residue protein sequence, read N- to C-terminus: Aspartyl/glutamyl-tRNA(Asn/Gln) amidotransferase subunit B (490 aa).

The protein belongs to the GatB/GatE family. GatB subfamily. In terms of assembly, heterotrimer of A, B and C subunits.

The catalysed reaction is L-glutamyl-tRNA(Gln) + L-glutamine + ATP + H2O = L-glutaminyl-tRNA(Gln) + L-glutamate + ADP + phosphate + H(+). It catalyses the reaction L-aspartyl-tRNA(Asn) + L-glutamine + ATP + H2O = L-asparaginyl-tRNA(Asn) + L-glutamate + ADP + phosphate + 2 H(+). Allows the formation of correctly charged Asn-tRNA(Asn) or Gln-tRNA(Gln) through the transamidation of misacylated Asp-tRNA(Asn) or Glu-tRNA(Gln) in organisms which lack either or both of asparaginyl-tRNA or glutaminyl-tRNA synthetases. The reaction takes place in the presence of glutamine and ATP through an activated phospho-Asp-tRNA(Asn) or phospho-Glu-tRNA(Gln). The sequence is that of Aspartyl/glutamyl-tRNA(Asn/Gln) amidotransferase subunit B from Prochlorococcus marinus subsp. pastoris (strain CCMP1986 / NIES-2087 / MED4).